The following is a 383-amino-acid chain: Small ribosomal subunit protein mS31 (383 aa).

Residues 1-21 (MLRSLCSIAVRLGGARQPRLL) constitute a mitochondrion transit peptide. A coiled-coil region spans residues 158–187 (VNEAQIKLQEQRKALLNDVREKVEQEEVEE).

The protein belongs to the mitochondrion-specific ribosomal protein mS31 family. In terms of assembly, component of the mitochondrial ribosome small subunit (28S) which comprises a 12S rRNA and about 30 distinct proteins.

It is found in the mitochondrion. This Caenorhabditis elegans protein is Small ribosomal subunit protein mS31 (mrps-31).